The chain runs to 285 residues: Cell division protein DivIB (285 aa).

Positions 1–19 (MNEKNKNDESKHQEDKLQD) are enriched in basic and acidic residues. The segment at 1 to 20 (MNEKNKNDESKHQEDKLQDQ) is disordered. The Cytoplasmic segment spans residues 1–66 (MNEKNKNDES…NRFNAMERNS (66 aa)). A helical transmembrane segment spans residues 67–87 (IHMIVILSIISLLLILLLSPL). One can recognise a POTRA domain in the interval 88 to 158 (MRFQKVEITG…QVAQIKIEEN (71 aa)). Residues 88 to 285 (MRFQKVEITG…FQVGTYFQQY (198 aa)) are Extracellular-facing.

Belongs to the FtsQ/DivIB family. DivIB subfamily.

It localises to the cell membrane. Functionally, cell division protein that may be involved in stabilizing or promoting the assembly of the division complex. The chain is Cell division protein DivIB from Weissella koreensis (strain KACC 15510).